The chain runs to 226 residues: Protein BASIC PENTACYSTEINE7 (226 aa).

The tract at residues 42-116 is disordered; that stretch reads IDLSQEPPAE…PSIPETKREK (75 aa). Positions 66-76 are enriched in basic and acidic residues; that stretch reads RDSRNDTETVK. Positions 88 to 105 are enriched in basic residues; it reads LKPKPQRKKRSVSNKSKK.

Belongs to the BBR/BPC family. In terms of tissue distribution, expressed in seedlings, leaves and pistils. Detected in anthers, in pollen grains, in young rosette, in leaf vasculature, in the lateral and primary roots, in embryo sac, and in the whole ovule.

It localises to the nucleus. In terms of biological role, transcriptional regulator that specifically binds to GA-rich elements (GAGA-repeats) present in regulatory sequences of genes involved in developmental processes. This Arabidopsis thaliana (Mouse-ear cress) protein is Protein BASIC PENTACYSTEINE7 (BPC7).